A 546-amino-acid polypeptide reads, in one-letter code: RuBisCO large subunit-binding protein subunit alpha, chloroplastic (546 aa).

Residues 1 to 6 (RFSVRA) constitute a chloroplast transit peptide. Serine 50 carries the post-translational modification Phosphoserine.

This sequence belongs to the chaperonin (HSP60) family. In terms of assembly, oligomer of probably six alpha and six beta subunits.

It is found in the plastid. Its subcellular location is the chloroplast. Its function is as follows. This protein binds RuBisCO small and large subunits and is implicated in the assembly of the enzyme oligomer. The polypeptide is RuBisCO large subunit-binding protein subunit alpha, chloroplastic (Brassica napus (Rape)).